Consider the following 474-residue polypeptide: tRNA-2-methylthio-N(6)-dimethylallyladenosine synthase (474 aa).

Positions 3-120 (KKLHIKTWGC…LPDMIEQVRR (118 aa)) constitute an MTTase N-terminal domain. Residues Cys12, Cys49, Cys83, Cys157, Cys161, and Cys164 each contribute to the [4Fe-4S] cluster site. The Radical SAM core domain maps to 143–375 (RAEGPTAFVS…QDRITQQAMR (233 aa)). In terms of domain architecture, TRAM spans 378–441 (RHMMGTVQRI…TNSLRGKFIR (64 aa)).

The protein belongs to the methylthiotransferase family. MiaB subfamily. In terms of assembly, monomer. [4Fe-4S] cluster is required as a cofactor.

The protein resides in the cytoplasm. The catalysed reaction is N(6)-dimethylallyladenosine(37) in tRNA + (sulfur carrier)-SH + AH2 + 2 S-adenosyl-L-methionine = 2-methylsulfanyl-N(6)-dimethylallyladenosine(37) in tRNA + (sulfur carrier)-H + 5'-deoxyadenosine + L-methionine + A + S-adenosyl-L-homocysteine + 2 H(+). In terms of biological role, catalyzes the methylthiolation of N6-(dimethylallyl)adenosine (i(6)A), leading to the formation of 2-methylthio-N6-(dimethylallyl)adenosine (ms(2)i(6)A) at position 37 in tRNAs that read codons beginning with uridine. In Shewanella sp. (strain W3-18-1), this protein is tRNA-2-methylthio-N(6)-dimethylallyladenosine synthase.